Reading from the N-terminus, the 358-residue chain is UDP-N-acetylglucosamine--N-acetylmuramyl-(pentapeptide) pyrophosphoryl-undecaprenol N-acetylglucosamine transferase (358 aa).

The UDP-N-acetyl-alpha-D-glucosamine site is built by S196 and Q287.

The protein belongs to the glycosyltransferase 28 family. MurG subfamily.

The protein localises to the cell membrane. The catalysed reaction is Mur2Ac(oyl-L-Ala-gamma-D-Glu-L-Lys-D-Ala-D-Ala)-di-trans,octa-cis-undecaprenyl diphosphate + UDP-N-acetyl-alpha-D-glucosamine = beta-D-GlcNAc-(1-&gt;4)-Mur2Ac(oyl-L-Ala-gamma-D-Glu-L-Lys-D-Ala-D-Ala)-di-trans,octa-cis-undecaprenyl diphosphate + UDP + H(+). It functions in the pathway cell wall biogenesis; peptidoglycan biosynthesis. In terms of biological role, cell wall formation. Catalyzes the transfer of a GlcNAc subunit on undecaprenyl-pyrophosphoryl-MurNAc-pentapeptide (lipid intermediate I) to form undecaprenyl-pyrophosphoryl-MurNAc-(pentapeptide)GlcNAc (lipid intermediate II). The sequence is that of UDP-N-acetylglucosamine--N-acetylmuramyl-(pentapeptide) pyrophosphoryl-undecaprenol N-acetylglucosamine transferase from Streptococcus uberis (strain ATCC BAA-854 / 0140J).